Reading from the N-terminus, the 491-residue chain is Cobyric acid synthase (491 aa).

Residues 253-429 form the GATase cobBQ-type domain; it reads AHRVAVVRLP…WHGSLEGDAL (177 aa). The Nucleophile role is filled by cysteine 334. Histidine 421 is a catalytic residue.

Belongs to the CobB/CobQ family. CobQ subfamily.

It participates in cofactor biosynthesis; adenosylcobalamin biosynthesis. Catalyzes amidations at positions B, D, E, and G on adenosylcobyrinic A,C-diamide. NH(2) groups are provided by glutamine, and one molecule of ATP is hydrogenolyzed for each amidation. In Mycobacterium marinum (strain ATCC BAA-535 / M), this protein is Cobyric acid synthase.